The following is a 298-amino-acid chain: tRNA uridine(34) hydroxylase (298 aa).

One can recognise a Rhodanese domain in the interval 123 to 217; that stretch reads QNPDVTLVDT…YLEEIPVAES (95 aa). The Cysteine persulfide intermediate role is filled by C177.

Belongs to the TrhO family.

It carries out the reaction uridine(34) in tRNA + AH2 + O2 = 5-hydroxyuridine(34) in tRNA + A + H2O. Its function is as follows. Catalyzes oxygen-dependent 5-hydroxyuridine (ho5U) modification at position 34 in tRNAs. This Picosynechococcus sp. (strain ATCC 27264 / PCC 7002 / PR-6) (Agmenellum quadruplicatum) protein is tRNA uridine(34) hydroxylase.